The chain runs to 590 residues: Aspartate--tRNA(Asp/Asn) ligase (590 aa).

Residue Glu175 coordinates L-aspartate. Positions 199 to 202 are aspartate; that stretch reads QQYK. Arg221 and His450 together coordinate L-aspartate. ATP is bound at residue 221–223; that stretch reads RDE. Residue Glu484 participates in ATP binding. Residue Arg491 coordinates L-aspartate. Residue 536–539 coordinates ATP; sequence GVDR.

This sequence belongs to the class-II aminoacyl-tRNA synthetase family. Type 1 subfamily. As to quaternary structure, homodimer.

The protein resides in the cytoplasm. It catalyses the reaction tRNA(Asx) + L-aspartate + ATP = L-aspartyl-tRNA(Asx) + AMP + diphosphate. Functionally, aspartyl-tRNA synthetase with relaxed tRNA specificity since it is able to aspartylate not only its cognate tRNA(Asp) but also tRNA(Asn). Reaction proceeds in two steps: L-aspartate is first activated by ATP to form Asp-AMP and then transferred to the acceptor end of tRNA(Asp/Asn). This is Aspartate--tRNA(Asp/Asn) ligase from Bradyrhizobium diazoefficiens (strain JCM 10833 / BCRC 13528 / IAM 13628 / NBRC 14792 / USDA 110).